The following is a 600-amino-acid chain: UvrABC system protein C (600 aa).

Residues 15–92 (EKPGCYLMKD…IKKYQPYYNV (78 aa)) form the GIY-YIG domain. The 36-residue stretch at 197–232 (GAVKQDLTQKMEQASEQLEFERAAEIRDQLKYIEET) folds into the UVR domain.

Belongs to the UvrC family. As to quaternary structure, interacts with UvrB in an incision complex.

The protein localises to the cytoplasm. Functionally, the UvrABC repair system catalyzes the recognition and processing of DNA lesions. UvrC both incises the 5' and 3' sides of the lesion. The N-terminal half is responsible for the 3' incision and the C-terminal half is responsible for the 5' incision. The sequence is that of UvrABC system protein C from Lactobacillus helveticus (strain DPC 4571).